Consider the following 278-residue polypeptide: Large ribosomal subunit protein uL2 (278 aa).

2 stretches are compositionally biased toward basic residues: residues 210-220 (GRMRWKGKRPS) and 257-278 (TRRK…NKKR). The tract at residues 210-278 (GRMRWKGKRP…VRRRKSNKKR (69 aa)) is disordered.

This sequence belongs to the universal ribosomal protein uL2 family. Part of the 50S ribosomal subunit. Forms a bridge to the 30S subunit in the 70S ribosome.

In terms of biological role, one of the primary rRNA binding proteins. Required for association of the 30S and 50S subunits to form the 70S ribosome, for tRNA binding and peptide bond formation. It has been suggested to have peptidyltransferase activity; this is somewhat controversial. Makes several contacts with the 16S rRNA in the 70S ribosome. In Acidothermus cellulolyticus (strain ATCC 43068 / DSM 8971 / 11B), this protein is Large ribosomal subunit protein uL2.